Consider the following 77-residue polypeptide: uncharacterized protein (77 aa).

Residues 49 to 71 (LVIASLILAIILLGILYYISYQM) form a helical membrane-spanning segment.

It is found in the membrane. This is an uncharacterized protein from Archaeoglobus fulgidus (strain ATCC 49558 / DSM 4304 / JCM 9628 / NBRC 100126 / VC-16).